Here is a 293-residue protein sequence, read N- to C-terminus: AM-toxin biosynthesis protein 14 (293 aa).

Transmembrane regions (helical) follow at residues 33–53, 73–93, 148–168, 183–203, and 221–241; these read SATASLPIGFSSLFLLTEVYI, IAVNTGLWICCLVLSIVALVL, GVLALVLTACLQCAAAGLCVW, LVPILHVGWGLHYTVFLLWIL, and VWCLLVAPLFISALVGATPLT.

It is found in the membrane. Its pathway is mycotoxin biosynthesis. Its function is as follows. Part of the gene clusters that mediate the biosynthesis of AM-toxins, host-selective toxins (HSTs) causing Alternaria blotch on apple, a worldwide distributed disease. AM-toxins are cyclic depsipeptides containing the 3 residues 2-hydroxy-isovaleric acid (2-HIV), dehydroalanine, L-alanine which are common for all 3 AM-toxins I to III. The fourth precursor is L-alpha-amino-methoxyphenyl-valeric acid (L-Amv) for AM-toxin I, L-alpha-amino-phenyl-valeric acid (L-Apv) for AM-toxin II, and L-alpha-amino-hydroxyphenyl-valeric acid (L-Ahv) for AM-toxin III. AM-toxins have two target sites for affecting susceptible apple cells; they cause invagination of the plasma membrane and electrolyte loss and chloroplast disorganization. The non-ribosomal peptide synthetase AMT1 contains 4 catalytic modules and is responsible for activation of each residue in AM-toxin. The aldo-keto reductase AMT2 catalyzes the conversion of 2-keto-isovaleric acid (2-KIV) to 2-hydroxy-isovaleric acid (2-HIV), one of the precursor residues incorporated by AMT1 during AM-toxin biosynthesis, by reduction of its ketone to an alcohol. The cytochrome P450 monooxygenase AMT3 and the thioesterase AMT4 are also important for AM-toxin production, but their exact function within the AM-toxin biosynthesis are not known yet. Up to 21 proteins (including AMT1 to AMT4) are predicted to be involved in AM-toxin biosynthesis since their expression ishighly up-regulated in AM-toxin-producing cultures. The sequence is that of AM-toxin biosynthesis protein 14 from Alternaria alternata (Alternaria rot fungus).